The chain runs to 404 residues: Glucose-1-phosphate adenylyltransferase (404 aa).

Residues Y99, G164, 179 to 180, and S197 contribute to the alpha-D-glucose 1-phosphate site; that span reads EK.

The protein belongs to the bacterial/plant glucose-1-phosphate adenylyltransferase family.

The catalysed reaction is alpha-D-glucose 1-phosphate + ATP + H(+) = ADP-alpha-D-glucose + diphosphate. It participates in capsule biogenesis; capsule polysaccharide biosynthesis. Its pathway is glycan biosynthesis; glycogen biosynthesis. Involved in the biosynthesis of ADP-glucose, a building block, required in the biosynthesis of maltose-1-phosphate (M1P) and in the elongation reactions to produce linear alpha-1,4-glucans. Catalyzes the reaction between ATP and alpha-D-glucose 1-phosphate (G1P) to produce pyrophosphate and ADP-Glc. This chain is Glucose-1-phosphate adenylyltransferase, found in Mycolicibacterium paratuberculosis (strain ATCC BAA-968 / K-10) (Mycobacterium paratuberculosis).